The sequence spans 263 residues: Small ribosomal subunit protein eS4 (263 aa).

Residues 42-105 (LPLIIFLRNR…GENFRLIYDV (64 aa)) form the S4 RNA-binding domain.

Belongs to the eukaryotic ribosomal protein eS4 family. Component of the small ribosomal subunit. Part of the small subunit (SSU) processome, composed of more than 70 proteins and the RNA chaperone small nucleolar RNA (snoRNA) U3.

The protein resides in the cytoplasm. It is found in the nucleus. It localises to the nucleolus. Component of the small ribosomal subunit. The ribosome is a large ribonucleoprotein complex responsible for the synthesis of proteins in the cell. Part of the small subunit (SSU) processome, first precursor of the small eukaryotic ribosomal subunit. During the assembly of the SSU processome in the nucleolus, many ribosome biogenesis factors, an RNA chaperone and ribosomal proteins associate with the nascent pre-rRNA and work in concert to generate RNA folding, modifications, rearrangements and cleavage as well as targeted degradation of pre-ribosomal RNA by the RNA exosome. The polypeptide is Small ribosomal subunit protein eS4 (rps4x) (Danio rerio (Zebrafish)).